A 263-amino-acid chain; its full sequence is Zinc finger protein STAMENLESS 1 (263 aa).

Positions 1–51 (MNSSRRQEGSPLDLNNLPDEFGKQTVESSTTTAASSAEASRVTKKKSNGGK) are disordered. The segment covering 25–40 (TVESSTTTAASSAEAS) has biased composition (low complexity). A C2H2-type zinc finger spans residues 58–80 (YECRFCSLKFCKSQALGGHMNRH).

Expressed in leaf primordia, inflorescence meristem, rachis branch meristems, floral meristem and floral organ primordia.

It localises to the nucleus. In terms of biological role, regulates floral organ identity and cell proliferation in the inner floral whorls. Probably specifies the identities of lodicule and stamen through positive regulation of MADS16 expression. May contribute to morphogenesis by suppressing OSH1 expression in the lateral organs. The chain is Zinc finger protein STAMENLESS 1 (SL1) from Oryza sativa subsp. japonica (Rice).